The sequence spans 136 residues: Large ribosomal subunit protein uL16 (136 aa).

This sequence belongs to the universal ribosomal protein uL16 family. As to quaternary structure, part of the 50S ribosomal subunit.

In terms of biological role, binds 23S rRNA and is also seen to make contacts with the A and possibly P site tRNAs. The sequence is that of Large ribosomal subunit protein uL16 from Shewanella halifaxensis (strain HAW-EB4).